We begin with the raw amino-acid sequence, 476 residues long: Glucose-1-phosphate adenylyltransferase (476 aa).

Alpha-D-glucose 1-phosphate is bound by residues Tyr114, Gly179, 194 to 195, and Ser212; that span reads EK.

The protein belongs to the bacterial/plant glucose-1-phosphate adenylyltransferase family. Homotetramer.

The enzyme catalyses alpha-D-glucose 1-phosphate + ATP + H(+) = ADP-alpha-D-glucose + diphosphate. Its pathway is glycan biosynthesis; glycogen biosynthesis. Involved in the biosynthesis of ADP-glucose, a building block required for the elongation reactions to produce glycogen. Catalyzes the reaction between ATP and alpha-D-glucose 1-phosphate (G1P) to produce pyrophosphate and ADP-Glc. The protein is Glucose-1-phosphate adenylyltransferase of Yersinia pestis bv. Antiqua (strain Antiqua).